The following is a 33-amino-acid chain: Brevinin-2DYa (33 aa).

Cysteine 27 and cysteine 33 are oxidised to a cystine.

As to expression, expressed by the skin glands.

It is found in the secreted. In terms of biological role, antimicrobial peptide. This Rana dybowskii (Dybovsky's frog) protein is Brevinin-2DYa.